We begin with the raw amino-acid sequence, 151 residues long: Large ribosomal subunit protein bL9 (151 aa).

This sequence belongs to the bacterial ribosomal protein bL9 family.

Its function is as follows. Binds to the 23S rRNA. The polypeptide is Large ribosomal subunit protein bL9 (Desulfotalea psychrophila (strain LSv54 / DSM 12343)).